Consider the following 587-residue polypeptide: MFS-type transporter opaD (587 aa).

9 consecutive transmembrane segments (helical) span residues 87–107 (VAIMIALCLAVLCMALDNTIL), 124–146 (MGWYVSAYMLAQSSMTLVYGKLL), 153–173 (WVYIAALLLFEGGSLICGVSP), 184–204 (ISGTGGSGILVSSFLIVTIIV), 214–234 (GILSSLYAISGVFGPLLGGAF), 242–262 (WCFYINLPVGGVTGFFILLLF), 284–304 (IIGLFLFIPALVSLLLVLQWG), 315–335 (IIALIAVFGVTILAFAAVEYW), and 357–377 (LFTFCLSGSVIIFNYYLPIWF). The N-linked (GlcNAc...) asparagine glycan is linked to N382. 5 consecutive transmembrane segments (helical) span residues 393-413 (IPLILAVALTSILSGWAVTTL), 414-434 (GYYIPFMYATPVIASVGAGLL), 447-467 (IGFQILYGIGVGLGFGLPLVV), 483-503 (LVTLTQGLAGALFNFVAQSVF), and 554-574 (VYLVGAALAAAALLGVVPIRW).

Belongs to the major facilitator superfamily. TCR/Tet family.

The protein localises to the membrane. MFS-type transporter; part of the gene cluster that mediates the biosynthesis of oxepinamides, derivatives of anthranilyl-containing tripeptides that share an oxepin ring and a fused pyrimidinone moiety. This is MFS-type transporter opaD from Aspergillus ustus.